The primary structure comprises 388 residues: Glucose-6-phosphate/phosphate translocator 2, chloroplastic (388 aa).

The transit peptide at 1-68 (MLSSIKPSSS…SASNFKREVK (68 aa)) directs the protein to the chloroplast. The next 8 helical transmembrane spans lie at 95-115 (LKIGIYFATWWALNVVFNIYN), 122-142 (FPYPWLTSTLSLACGSLMMLV), 158-178 (FWKTLFPVAVAHTIGHVAATV), 211-231 (FPLPVYLSLLPIIGGCALAAI), 233-253 (ELNFNITGFMGAMISNLAFVF), 281-301 (LVILTPFSIAVEGPQMWAAGW), 305-325 (VSQVGPNFVWWVVAQSVFYHL), and 358-378 (IIIFHTPIQPVNALGAAIAIF). Positions 113–231 (IYNKKVLNAF…IIGGCALAAI (119 aa)) constitute an EamA domain.

This sequence belongs to the TPT transporter family. GPT (TC 2.A.7.9) subfamily. In terms of tissue distribution, expressed in seeds, flowers, stamens, and rosette leaves, with highest levels found in sepals and senescing leaves.

The protein resides in the plastid. The protein localises to the chloroplast membrane. Its function is as follows. Glucose 6-phosphate (Glc6P) transporter. Also transports inorganic phosphate, 3-phosphoglycerate, triose phosphates and, to a leser extent, phosphoenolpyruvate. Responsible for the transport of Glc6P into plastids of heterotrophic tissues where it can be used as a carbon source for starch biosynthesis, as substrate for fatty acid biosynthesis or as substrate for NADPH generation via the oxidative pentose phosphate pathway (OPPP). Required for dynamic acclimation of photosynthesis and partitioning of Glc6P between the chloroplast and the cytosol. May modulate the sensing of sugar status during early seedling development. In Arabidopsis thaliana (Mouse-ear cress), this protein is Glucose-6-phosphate/phosphate translocator 2, chloroplastic.